The sequence spans 394 residues: Protein LAX PANICLE 2 (394 aa).

A disordered region spans residues 1 to 193 (MVPARSLAHP…PTPRHHHHDV (193 aa)). Residues 8–20 (AHPHPHLVRRRRD) are compositionally biased toward basic residues. Residues 60-84 (QHDPPKQPPPREADDDHHRIQEREP) are compositionally biased toward basic and acidic residues. Low complexity-rich tracts occupy residues 90-101 (TTTRNQRLQLQL), 119-131 (GTSG…SSSN), and 146-155 (GPASPGASAG). The span at 170-185 (APQPPTPTPTPTPTPT) shows a compositional bias: pro residues.

Interacts with LAX1.

The protein resides in the nucleus. In terms of biological role, involved in the regulation of shoot branching by controlling axillary meristem (AM) formation. Functions in association with LAX1 to regulate the process of AM formation. Possesses transactivation activity in yeast. The polypeptide is Protein LAX PANICLE 2 (Oryza sativa subsp. japonica (Rice)).